Here is a 3503-residue protein sequence, read N- to C-terminus: Protein dachsous (3503 aa).

An N-terminal signal peptide occupies residues 1 to 20 (MLRSSLLILLAIVLLGSSQA). Residues 21–3045 (ASHDQERERK…SSSGSIGDWA (3025 aa)) are Extracellular-facing. 14 Cadherin domains span residues 22–121 (SHDQ…APTF), 122–233 (PQTS…QPIF), 234–340 (NQSR…QPTI), 345–451 (LSDD…PPEF), 452–558 (EQDL…EPIF), 559–662 (DQSF…RPVF), 663–774 (YPRE…PPIF), 775–878 (EKAR…APEF), 879–983 (EASM…PPVF), 984–1100 (EKDE…DPKF), 1101–1203 (QKSK…APEI), 1205–1312 (DPQE…RPTF), 1313–1432 (TSSS…APEW), and 1433–1549 (PQDP…APHF). N-linked (GlcNAc...) asparagine glycans are attached at residues N220 and N234. S236 is modified (phosphoserine). N-linked (GlcNAc...) asparagine glycosylation is found at N245, N381, and N416. N-linked (GlcNAc...) asparagine glycosylation is found at N564, N594, and N743. 6 N-linked (GlcNAc...) asparagine glycosylation sites follow: N966, N991, N1006, N1029, N1143, and N1236. N1453, N1479, N1524, and N1553 each carry an N-linked (GlcNAc...) asparagine glycan. 13 Cadherin domains span residues 1556–1666 (GGKT…PPRF), 1667–1794 (LQAV…SPEF), 1796–1899 (PGSC…APRF), 1900–2004 (KLSK…RPIF), 2005–2111 (ERYP…TPVL), 2114–2269 (QNET…SPKF), 2270–2375 (SQKQ…QPTF), 2375–2479 (FPPN…APVF), 2489–2595 (AILP…RSQF), 2596–2699 (LQNQ…FPIF), 2701–2809 (RSAK…EPKF), 2810–2916 (PLTE…TPQF), and 2919–3028 (RTYR…HPGT). N-linked (GlcNAc...) asparagine glycosylation is found at N1700, N1884, and N1940. A glycan (N-linked (GlcNAc...) asparagine) is linked at N2115. Residues 2193 to 2225 (GRALHYEEEIDESSEEDPNNSTRSQRALTSSSF) form a disordered region. Over residues 2200 to 2210 (EEIDESSEEDP) the composition is skewed to acidic residues. N2211 and N2212 each carry an N-linked (GlcNAc...) asparagine glycan. Residues 2211–2225 (NNSTRSQRALTSSSF) are compositionally biased toward polar residues. Residues N2421, N2511, N2520, N2547, N2588, and N2678 are each glycosylated (N-linked (GlcNAc...) asparagine). 2 N-linked (GlcNAc...) asparagine glycosylation sites follow: N2845 and N2967. Residues 3046 to 3066 (IGLLVAFLLVLCAAAGIFLFI) form a helical membrane-spanning segment. Residues 3067–3503 (HMRSRKPRNA…SQRGNVGTRM (437 aa)) are Cytoplasmic-facing. 3 disordered regions span residues 3114-3195 (AGAA…GRIS), 3360-3404 (LSEH…IPPP), and 3431-3503 (LPRS…GTRM). Composition is skewed to low complexity over residues 3133–3159 (GAHAGSSGAATTSELSGSEQSGSSGRG) and 3363–3372 (HSGSGASSSA). The span at 3391 to 3404 (KPPPSAPPTHIPPP) shows a compositional bias: pro residues. Over residues 3440–3463 (ASGSFSTSSAMSPSFSPSLSPLAT) the composition is skewed to low complexity. Phosphoserine is present on residues S3465 and S3469. Residues 3492 to 3503 (QPSQRGNVGTRM) show a composition bias toward polar residues.

As to quaternary structure, interacts (via cytoplasmic region) with Myo31DF. Phosphorylated by fj on Ser/Thr of cadherin domains. As to expression, expressed in embryonic ectoderm. In larvae, expression is restricted to imaginal disks and brain.

The protein resides in the cell membrane. The protein localises to the cell junction. Required for normal morphogenesis of adult structures derived from imaginal disks. Plays a role in planar cell polarity and in determining body left-right asymmetry. Expression in segment H1 of the imaginal ring and interaction with Myo31DF are required to induce changes of cell shape and orientation in segment H2, which then gives rise to normal, dextral looping of the adult hindgut. The polypeptide is Protein dachsous (ds) (Drosophila melanogaster (Fruit fly)).